The sequence spans 711 residues: Origin recognition complex subunit 3 (711 aa).

Phosphoserine occurs at positions 23 and 516.

The protein belongs to the ORC3 family. As to quaternary structure, component of ORC, a complex composed of at least 6 subunits: ORC1, ORC2, ORC3, ORC4, ORC5 and ORC6. ORC is regulated in a cell-cycle dependent manner. It is sequentially assembled at the exit from anaphase of mitosis and disassembled as cells enter S phase. Multi-mono-ubiquitinated by OBI1; ubiquitination is important for efficient DNA replication origin site activation. Ubiquitination levels are low in mitotic and early G1-phAse cells and are induced in late G1-/early S-phase, peaking in S-phase and decrease toward the end of the cell cycle.

It localises to the nucleus. Its subcellular location is the chromosome. Its function is as follows. Component of the origin recognition complex (ORC) that binds origins of replication. DNA-binding is ATP-dependent. The specific DNA sequences that define origins of replication have not been identified yet. ORC is required to assemble the pre-replication complex necessary to initiate DNA replication. Binds histone H3 and H4 trimethylation marks H3K9me3, H3K27me3 and H4K20me3. In Homo sapiens (Human), this protein is Origin recognition complex subunit 3 (ORC3).